A 108-amino-acid chain; its full sequence is Insertion element IS629 uncharacterized 12 kDa protein S4062 (108 aa).

It belongs to the transposase 8 family.

The chain is Insertion element IS629 uncharacterized 12 kDa protein S4062 from Shigella flexneri.